A 200-amino-acid polypeptide reads, in one-letter code: Adenylate kinase (200 aa).

Glycine 11–threonine 16 lines the ATP pocket. Residues serine 31–valine 60 are NMP. AMP contacts are provided by residues threonine 32, arginine 37, asparagine 58–valine 60, glycine 86–arginine 89, and glutamine 93. The LID stretch occupies residues arginine 127–aspartate 137. An ATP-binding site is contributed by arginine 128. Residues arginine 134 and arginine 145 each coordinate AMP. Position 173 (glycine 173) interacts with ATP.

It belongs to the adenylate kinase family. Monomer.

It is found in the cytoplasm. It carries out the reaction AMP + ATP = 2 ADP. Its pathway is purine metabolism; AMP biosynthesis via salvage pathway; AMP from ADP: step 1/1. Functionally, catalyzes the reversible transfer of the terminal phosphate group between ATP and AMP. Plays an important role in cellular energy homeostasis and in adenine nucleotide metabolism. The polypeptide is Adenylate kinase (Clavibacter michiganensis subsp. michiganensis (strain NCPPB 382)).